A 261-amino-acid chain; its full sequence is Proteasome assembly chaperone 2 (261 aa).

This sequence belongs to the PSMG2 family. As to quaternary structure, forms a heterodimer with psmg1. Post-translationally, degraded by the proteasome upon completion of 20S proteasome maturation.

It is found in the nucleus. Its function is as follows. Chaperone protein which promotes assembly of the 20S proteasome as part of a heterodimer with psmg1. The polypeptide is Proteasome assembly chaperone 2 (Xenopus tropicalis (Western clawed frog)).